The primary structure comprises 873 residues: Disks large homolog 1 (873 aa).

The L27 domain maps to 4–64 (RQKDAQRALQ…YYEVSLQDTE (61 aa)). The tract at residues 62 to 135 (DTEDKPIEDS…SPHIPGDARP (74 aa)) is disordered. The segment covering 63–77 (TEDKPIEDSSLKSRE) has biased composition (basic and acidic residues). Residues 85–96 (WNLSVPPSTTGP) show a composition bias toward polar residues. 2 consecutive PDZ domains span residues 230–317 (EITL…RRRK) and 325–412 (DVKL…AKPT). The span at 441–456 (SYLSQPLTPATPSRYS) shows a compositional bias: polar residues. Residues 441–464 (SYLSQPLTPATPSRYSPVSKGMLG) form a disordered region. In terms of domain architecture, PDZ 3 spans 474 to 555 (KIVLHRGTTG…TVTIIAQYRP (82 aa)). Residues 636 to 662 (NKDSGEQDTSDVDQHVTSNASDSESSF) form a disordered region. Polar residues predominate over residues 650 to 662 (HVTSNASDSESSF). In terms of domain architecture, Guanylate kinase-like spans 683–858 (SRPVIILGPM…IYNQVKQIIE (176 aa)).

It belongs to the MAGUK family.

The protein localises to the cell membrane. It is found in the endoplasmic reticulum membrane. It localises to the cell junction. Its subcellular location is the apical cell membrane. Functionally, essential multidomain scaffolding protein required for normal development. Recruits channels, receptors and signaling molecules to discrete plasma membrane domains in polarized cells. Promotes epithelial cell layer barrier function via maintaining cell-cell adhesion. May play a role in adherens junction assembly, signal transduction and cell proliferation. May play a role in synapse assembly and function. This Danio rerio (Zebrafish) protein is Disks large homolog 1 (dlg1).